The sequence spans 2599 residues: Non-reducing polyketide synthase azaA (2599 aa).

An N-terminal acylcarrier protein transacylase domain (SAT) region spans residues 95–231 (PNILLSPMVV…AARSISSLQQ (137 aa)). C132 acts as the Nucleophile; for transacylase activity in catalysis. H250 serves as the catalytic Proton donor/acceptor; for transacylase activity. A Ketosynthase family 3 (KS3) domain is found at 372-790 (PNEIAVIGMS…GSNASMVVAQ (419 aa)). Active-site for beta-ketoacyl synthase activity residues include C539, H674, and H713. A malonyl-CoA:ACP transacylase (MAT) domain region spans residues 902 to 1193 (FGGQISNYVG…ITSMASRALG (292 aa)). Residues 1282–1413 (PKTLWSLIEA…GKLAFLSGQD (132 aa)) are N-terminal hotdog fold. The PKS/mFAS DH domain maps to 1282-1591 (PKTLWSLIEA…YHKVAKASMS (310 aa)). The segment at 1310–1589 (LVSGHVIANT…INYHKVAKAS (280 aa)) is product template (PT) domain. The active-site Proton acceptor; for dehydratase activity is the H1314. The C-terminal hotdog fold stretch occupies residues 1443–1591 (ADDIIQGRNI…YHKVAKASMS (149 aa)). D1499 acts as the Proton donor; for dehydratase activity in catalysis. The tract at residues 1601 to 1652 (EAAPSSSTRAHPTSSSSPRLPGPFVPEDKSQNETQTAGTNAVAKKKSEKSAQ) is disordered. The span at 1602–1619 (AAPSSSTRAHPTSSSSPR) shows a compositional bias: low complexity. In terms of domain architecture, Carrier spans 1653–1727 (QNVLDKTRAL…GLVEYVQSAV (75 aa)). S1687 is subject to O-(pantetheine 4'-phosphoryl)serine. Positions 1749-1779 (NLAASPSSSSSSTNLTEDSSLDPTETTTNIS) are disordered. Positions 1750–1766 (LAASPSSSSSSTNLTED) are enriched in low complexity. Over residues 1769–1779 (LDPTETTTNIS) the composition is skewed to polar residues. Residues 1952–2140 (DSLLNKLSYR…VGYGQVDWTD (189 aa)) form a methyltransferase domain region. The tract at residues 2222 to 2467 (ITGATGSLGV…LCWTPVNDVA (246 aa)) is NADPH-binding (R) domain.

Requires pantetheine 4'-phosphate as cofactor.

The protein operates within secondary metabolite biosynthesis. Functionally, non-reducing polyketide synthase; part of the gene cluster that mediates the biosynthesis of azaphilones, a class of fungal metabolites characterized by a highly oxygenated pyrano-quinone bicyclic core and exhibiting a broad range of bioactivities. In the first step, the non-reducing polyketide synthase azaA forms the hexaketide precursor from successive condensations of five malonyl-CoA units, presumably with a simple acetyl-CoA starter unit. The reactive polyketide chain then undergoes a PT-mediated C2-C7 cyclization to afford the aromatic ring and is eventually released as an aldehyde through the R-domain. The putative ketoreductase azaE is proposed to catalyze the reduction of the terminal ketone resulting in the early culture product FK17-P2a. The monooxygenase azaH was demonstrated to be the only enzyme required to convert FK17-P2a to azanigerone E. AzaH first hydroxylates the benzaldehyde intermediate FK17-P2a at C4, which triggers the formation of the pyran-ring to afford azanigerone E. In parallel, the 2,4-dimethylhexanoyl chain is synthesized by the HR-PKS azaB and is proposed to be transferred to the C4-hydroxyl of azanigerone E by the acyltransferase azaD directly from the ACP domain of azaB. Alternatively, the 2,4-dimethyl-hexanoyl chain may be offloaded from the HR-PKS as a carboxylic acid and converted to an acyl-CoA by azaF. The resulting acyl-CoA molecule could then be taken up as a substrate by AzaD to form azanigerone B. To yield the carboxylic acid substituent in azanigerone A, the hydroxypropyl side chain of azanigerone B would need to undergo a C-C oxidative cleavage catalyzed by cytochrome P450 AzaI. AzaI is proposed to act on a vicinal diol that leads to a C-C bond scission either through an alkoxyradical intermediate or a peroxy complex. In the biosynthesis of azanigerone A, azanigerone B first undergoes hydroxylation at C10, possibly catalyzed by one of the two FAD-dependent monooxygenases encoded in the cluster, azaG or azaL, resulting in the vicinal diol azanigerone C. Oxidative cleavage of azanigerone C by azaI would yield the corresponding aldehyde derivative of azanigerone A. Finally, the dehydrogenase azaJ is proposed to convert the aldehyde functional group into the carboxylic acid, completing the conversion from azanigerone B to azanigerone A. Alternatively, the oxidation of aldehyde to carboxylic acid may be catalyzed by the same P450 enzyme azaI via consecutive oxidation or by endogenous alcohol dehydrogenase. The chain is Non-reducing polyketide synthase azaA from Aspergillus niger (strain ATCC 1015 / CBS 113.46 / FGSC A1144 / LSHB Ac4 / NCTC 3858a / NRRL 328 / USDA 3528.7).